Reading from the N-terminus, the 2155-residue chain is Conidial pigment polyketide synthase PfmaE (2155 aa).

The interval 8–245 (LLFGDQSLDT…TAIPVYGPYH (238 aa)) is N-terminal acylcarrier protein transacylase domain (SAT). In terms of domain architecture, Ketosynthase family 3 (KS3) spans 381–813 (KCKLAIVGMA…GGNTGLLLED (433 aa)). Residues Cys-553, His-688, and His-731 each act as for beta-ketoacyl synthase activity in the active site. The tract at residues 910-1231 (AFMFTGQGSH…LCTLHSAGLN (322 aa)) is malonyl-CoA:ACP transacylase (MAT) domain. The For acyl/malonyl transferase activity role is filled by Ser-1001. The product template (PT) domain stretch occupies residues 1293-1608 (TTTVQKVVRE…PRKVLNVVLP (316 aa)). Residues 1297 to 1428 (QKVVREEVKG…CKVFFGDNEE (132 aa)) form an N-terminal hotdog fold region. A PKS/mFAS DH domain is found at 1297-1604 (QKVVREEVKG…FQAIPRKVLN (308 aa)). The Proton acceptor; for dehydratase activity role is filled by His-1329. The C-terminal hotdog fold stretch occupies residues 1455 to 1604 (DASKIGRGLA…FQAIPRKVLN (150 aa)). Asp-1516 (proton donor; for dehydratase activity) is an active-site residue. 2 consecutive Carrier domains span residues 1653-1730 (LTKN…AQFE) and 1779-1856 (GNVS…GIED). An O-(pantetheine 4'-phosphoryl)serine modification is found at Ser-1690. The segment at 1738–1782 (EENAHSSASSDSADMETESNFTTPSDDSEKDEVKGDAPAADGNVS) is disordered. At Ser-1816 the chain carries O-(pantetheine 4'-phosphoryl)serine. A disordered region spans residues 1855–1892 (EDKPKRAAPKSAKQEPAKPEPKVQGEAKAHTNPVDNYP). Over residues 1866-1883 (AKQEPAKPEPKVQGEAKA) the composition is skewed to basic and acidic residues. Positions 1911–2041 (QLFMIPDGSG…LGEGDDAEAK (131 aa)) are thioesterase (TE) domain.

The protein operates within pigment biosynthesis; melanin biosynthesis. Its function is as follows. Non-reducing polyketide synthase; part of the gene cluster that mediates the biosynthesis of dihydroxynaphthalene (DHN)-melanin, a bluish-green pigment forming a dark layer in the conidial wall that protects the conidia from UV radiations. The first step of the pathway is the production of the pentaketide 1,3,6,8-tetrahydroxynaphthalene (1,3,6,8-THN or T4HN) by the polyketide synthase PfmaE though condensation of acetyl-CoA with malonyl-CoA. T4HN is not stable and easily oxidizes into the stable form flaviolin. T4HN is also substrate of the hydroxynaphthalene reductase PfmaG to yield scytalone. The scytalone dehydratase PfmaJ then reduces scytalone to 1,3,8-THN. 1,3,8-THN is then substrate of the hydroxynaphthalene reductase PfmaI to yield vermelone. Vermelone is further converted by the multicopper oxidase PfmaD to 1,8-DHN. Finally the laccase PFICI_06862 transforms 1,8-DHN to DHN-melanin. The roles of the 5-oxoprolinase PfmaA and the proline iminopeptidase PfmaB within the cluster have not been elucidated yet. This Pestalotiopsis fici (strain W106-1 / CGMCC3.15140) protein is Conidial pigment polyketide synthase PfmaE.